Consider the following 444-residue polypeptide: Amino-acid acetyltransferase (444 aa).

The N-acetyltransferase domain maps to 295–434 (EKVRRANIND…QALYNYQRRS (140 aa)).

Belongs to the acetyltransferase family. ArgA subfamily. In terms of assembly, homohexamer.

The protein localises to the cytoplasm. The enzyme catalyses L-glutamate + acetyl-CoA = N-acetyl-L-glutamate + CoA + H(+). It functions in the pathway amino-acid biosynthesis; L-arginine biosynthesis; N(2)-acetyl-L-ornithine from L-glutamate: step 1/4. In Proteus mirabilis (strain HI4320), this protein is Amino-acid acetyltransferase.